The primary structure comprises 94 residues: Co-chaperonin GroES (94 aa).

Belongs to the GroES chaperonin family. In terms of assembly, heptamer of 7 subunits arranged in a ring. Interacts with the chaperonin GroEL.

The protein localises to the cytoplasm. In terms of biological role, together with the chaperonin GroEL, plays an essential role in assisting protein folding. The GroEL-GroES system forms a nano-cage that allows encapsulation of the non-native substrate proteins and provides a physical environment optimized to promote and accelerate protein folding. GroES binds to the apical surface of the GroEL ring, thereby capping the opening of the GroEL channel. The protein is Co-chaperonin GroES of Lactococcus lactis subsp. cremoris (strain SK11).